Reading from the N-terminus, the 165-residue chain is UPF0303 protein Bamb_1459 (165 aa).

It belongs to the UPF0303 family.

This chain is UPF0303 protein Bamb_1459, found in Burkholderia ambifaria (strain ATCC BAA-244 / DSM 16087 / CCUG 44356 / LMG 19182 / AMMD) (Burkholderia cepacia (strain AMMD)).